The following is a 523-amino-acid chain: Fidgetin-like protein 1 (523 aa).

Residues 114–154 (PVQQAVKSRPEGQFPESRNNSTKKIDAQQYSSESSSQSGFG) form a disordered region. A compositionally biased stretch (low complexity) spans 141-151 (QQYSSESSSQS). ATP-binding positions include A253 and 293–298 (GTGKTL).

The protein belongs to the AAA ATPase family. As to quaternary structure, hexamer. Mg(2+) serves as cofactor.

The catalysed reaction is ATP + H2O = ADP + phosphate + H(+). The protein is Fidgetin-like protein 1 of Drosophila melanogaster (Fruit fly).